The following is a 63-amino-acid chain: MSDKCGNCDCADSSQCVKKGNSIDIVETDKSYIEDVVMGVPAAESGGKCKCGTSCPCVNCTCD.

Belongs to the metallothionein superfamily. Type 15 family.

Metallothioneins have a high content of cysteine residues that bind various heavy metals. The chain is Metallothionein-like protein type 3 from Actinidia deliciosa (Kiwi).